Here is a 131-residue protein sequence, read N- to C-terminus: Conotoxin Cal8.2 (131 aa).

Residues 1 to 19 (MKLLLTLLLGSALMCITLA) form the signal peptide. Positions 20-38 (DECGLGTHRPVKEVIDNVR) are excised as a propeptide.

Post-translationally, contains 4 disulfide bonds. As to expression, expressed by the venom duct.

The protein localises to the secreted. In terms of biological role, probable neurotoxin with unknown target. Possibly targets ion channels. This chain is Conotoxin Cal8.2, found in Californiconus californicus (California cone).